A 712-amino-acid polypeptide reads, in one-letter code: Auxin response factor 15 (712 aa).

The TF-B3 DNA-binding region spans phenylalanine 142 to alanine 244.

It belongs to the ARF family. Homo and heterodimers. In terms of tissue distribution, expressed in roots, culms, leaves and young panicles.

Its subcellular location is the nucleus. Auxin response factors (ARFs) are transcriptional factors that bind specifically to the DNA sequence 5'-TGTCTC-3' found in the auxin-responsive promoter elements (AuxREs). This Oryza sativa subsp. japonica (Rice) protein is Auxin response factor 15 (ARF15).